The chain runs to 502 residues: Mannitol 2-dehydrogenase (502 aa).

37–48 contributes to the NAD(+) binding site; it reads IVHIGVGGFHRA.

This sequence belongs to the mannitol dehydrogenase family. Monomer.

The enzyme catalyses D-mannitol + NAD(+) = D-fructose + NADH + H(+). In terms of biological role, catalyzes the NAD(H)-dependent interconversion of D-fructose and D-mannitol in the mannitol metabolic pathway. This is Mannitol 2-dehydrogenase from Emericella nidulans (strain FGSC A4 / ATCC 38163 / CBS 112.46 / NRRL 194 / M139) (Aspergillus nidulans).